The primary structure comprises 219 residues: tRNA (guanine-N(7)-)-methyltransferase (219 aa).

Residues E43, D68, E101, and N124 each contribute to the S-adenosyl-L-methionine site. The substrate site is built by K128 and D160.

This sequence belongs to the class I-like SAM-binding methyltransferase superfamily. TrmB family.

The catalysed reaction is guanosine(46) in tRNA + S-adenosyl-L-methionine = N(7)-methylguanosine(46) in tRNA + S-adenosyl-L-homocysteine. It functions in the pathway tRNA modification; N(7)-methylguanine-tRNA biosynthesis. In terms of biological role, catalyzes the formation of N(7)-methylguanine at position 46 (m7G46) in tRNA. In Clostridium botulinum (strain Alaska E43 / Type E3), this protein is tRNA (guanine-N(7)-)-methyltransferase.